We begin with the raw amino-acid sequence, 64 residues long: Conotoxin reg3.16 (64 aa).

Residues 1-19 form the signal peptide; sequence MSKLGVFLTICLLLFPLTA. The propeptide occupies 20–49; the sequence is LQLDGDQPADKPAQRKLKILPKRKHWTRFT. 3 disulfide bridges follow: C50–C64, C51–C60, and C56–C63.

The protein belongs to the conotoxin M superfamily. Expressed by the venom duct.

Its subcellular location is the secreted. The polypeptide is Conotoxin reg3.16 (Conus regius (Crown cone)).